The primary structure comprises 334 residues: Ferrochelatase (334 aa).

Fe cation is bound by residues His-207 and Glu-288.

It belongs to the ferrochelatase family.

It localises to the cytoplasm. It carries out the reaction heme b + 2 H(+) = protoporphyrin IX + Fe(2+). It participates in porphyrin-containing compound metabolism; protoheme biosynthesis; protoheme from protoporphyrin-IX: step 1/1. Functionally, catalyzes the ferrous insertion into protoporphyrin IX. The chain is Ferrochelatase from Helicobacter pylori (strain P12).